Here is a 224-residue protein sequence, read N- to C-terminus: Holliday junction branch migration complex subunit RuvA (224 aa).

The domain I stretch occupies residues 1-64; it reads MIGRLSGVLV…EDLLQLYGFP (64 aa). Residues 65–143 form a domain II region; it reads TLLEKEWHRL…EVMAMGGTLE (79 aa). The tract at residues 144 to 171 is flexible linker; sequence AALDGVIEDGMAASEGIEPPSAARPAVP. A domain III region spans residues 172–224; the sequence is SAASDQAGALSALVNLGYGQGEAASAVATAAGEGAVGETDIIRAALRLLAPKG.

Belongs to the RuvA family. Homotetramer. Forms an RuvA(8)-RuvB(12)-Holliday junction (HJ) complex. HJ DNA is sandwiched between 2 RuvA tetramers; dsDNA enters through RuvA and exits via RuvB. An RuvB hexamer assembles on each DNA strand where it exits the tetramer. Each RuvB hexamer is contacted by two RuvA subunits (via domain III) on 2 adjacent RuvB subunits; this complex drives branch migration. In the full resolvosome a probable DNA-RuvA(4)-RuvB(12)-RuvC(2) complex forms which resolves the HJ.

The protein localises to the cytoplasm. In terms of biological role, the RuvA-RuvB-RuvC complex processes Holliday junction (HJ) DNA during genetic recombination and DNA repair, while the RuvA-RuvB complex plays an important role in the rescue of blocked DNA replication forks via replication fork reversal (RFR). RuvA specifically binds to HJ cruciform DNA, conferring on it an open structure. The RuvB hexamer acts as an ATP-dependent pump, pulling dsDNA into and through the RuvAB complex. HJ branch migration allows RuvC to scan DNA until it finds its consensus sequence, where it cleaves and resolves the cruciform DNA. In Dinoroseobacter shibae (strain DSM 16493 / NCIMB 14021 / DFL 12), this protein is Holliday junction branch migration complex subunit RuvA.